The chain runs to 139 residues: D-ribose pyranase (139 aa).

The active-site Proton donor is the His-20. Substrate is bound by residues Asp-28, His-106, and 128 to 130 (YAN).

Belongs to the RbsD / FucU family. RbsD subfamily. As to quaternary structure, homodecamer.

Its subcellular location is the cytoplasm. It catalyses the reaction beta-D-ribopyranose = beta-D-ribofuranose. It functions in the pathway carbohydrate metabolism; D-ribose degradation; D-ribose 5-phosphate from beta-D-ribopyranose: step 1/2. In terms of biological role, catalyzes the interconversion of beta-pyran and beta-furan forms of D-ribose. This Aliivibrio salmonicida (strain LFI1238) (Vibrio salmonicida (strain LFI1238)) protein is D-ribose pyranase.